The sequence spans 116 residues: Aspartate 1-decarboxylase (116 aa).

Ser25 serves as the catalytic Schiff-base intermediate with substrate; via pyruvic acid. Residue Ser25 is modified to Pyruvic acid (Ser). Thr57 is a binding site for substrate. The Proton donor role is filled by Tyr58. Residue 73 to 75 (GAA) participates in substrate binding.

It belongs to the PanD family. Heterooctamer of four alpha and four beta subunits. Pyruvate is required as a cofactor. Is synthesized initially as an inactive proenzyme, which is activated by self-cleavage at a specific serine bond to produce a beta-subunit with a hydroxyl group at its C-terminus and an alpha-subunit with a pyruvoyl group at its N-terminus.

It is found in the cytoplasm. The catalysed reaction is L-aspartate + H(+) = beta-alanine + CO2. The protein operates within cofactor biosynthesis; (R)-pantothenate biosynthesis; beta-alanine from L-aspartate: step 1/1. Catalyzes the pyruvoyl-dependent decarboxylation of aspartate to produce beta-alanine. The chain is Aspartate 1-decarboxylase from Leptospira borgpetersenii serovar Hardjo-bovis (strain JB197).